We begin with the raw amino-acid sequence, 148 residues long: Cyanate hydratase (148 aa).

Catalysis depends on residues Arg89, Glu92, and Ser115.

Belongs to the cyanase family.

It carries out the reaction cyanate + hydrogencarbonate + 3 H(+) = NH4(+) + 2 CO2. Its function is as follows. Catalyzes the reaction of cyanate with bicarbonate to produce ammonia and carbon dioxide. This Sulfurisphaera tokodaii (strain DSM 16993 / JCM 10545 / NBRC 100140 / 7) (Sulfolobus tokodaii) protein is Cyanate hydratase.